Consider the following 354-residue polypeptide: 3-isopropylmalate dehydrogenase (354 aa).

Residue 76 to 87 (GPRWDGAKERPE) coordinates NAD(+). Positions 94, 104, 130, and 215 each coordinate substrate. Mg(2+) is bound by residues Asp215, Asp239, and Asp243. 273–285 (GSAPDIAGKNKAN) is an NAD(+) binding site.

The protein belongs to the isocitrate and isopropylmalate dehydrogenases family. LeuB type 1 subfamily. In terms of assembly, homodimer. It depends on Mg(2+) as a cofactor. Mn(2+) is required as a cofactor.

The protein localises to the cytoplasm. The catalysed reaction is (2R,3S)-3-isopropylmalate + NAD(+) = 4-methyl-2-oxopentanoate + CO2 + NADH. It functions in the pathway amino-acid biosynthesis; L-leucine biosynthesis; L-leucine from 3-methyl-2-oxobutanoate: step 3/4. In terms of biological role, catalyzes the oxidation of 3-carboxy-2-hydroxy-4-methylpentanoate (3-isopropylmalate) to 3-carboxy-4-methyl-2-oxopentanoate. The product decarboxylates to 4-methyl-2 oxopentanoate. This is 3-isopropylmalate dehydrogenase from Bacillus anthracis.